We begin with the raw amino-acid sequence, 249 residues long: uncharacterized protein (249 aa).

11–34 (IFGGRSQIGGELARRLAAGATMVL) is a binding site for NADP(+). Residue S142 participates in substrate binding. Y155 (proton acceptor) is an active-site residue.

Belongs to the short-chain dehydrogenases/reductases (SDR) family.

This is an uncharacterized protein from Mycobacterium tuberculosis (strain ATCC 25618 / H37Rv).